A 234-amino-acid polypeptide reads, in one-letter code: Sugar fermentation stimulation protein homolog (234 aa).

This sequence belongs to the SfsA family.

This is Sugar fermentation stimulation protein homolog from Photobacterium profundum (strain SS9).